Here is a 491-residue protein sequence, read N- to C-terminus: UDP-N-acetylmuramate--L-alanine ligase (491 aa).

Gly126–Thr132 is an ATP binding site.

This sequence belongs to the MurCDEF family.

The protein localises to the cytoplasm. The catalysed reaction is UDP-N-acetyl-alpha-D-muramate + L-alanine + ATP = UDP-N-acetyl-alpha-D-muramoyl-L-alanine + ADP + phosphate + H(+). It participates in cell wall biogenesis; peptidoglycan biosynthesis. Functionally, cell wall formation. The chain is UDP-N-acetylmuramate--L-alanine ligase from Shigella flexneri.